The chain runs to 206 residues: Transmembrane emp24 domain-containing protein bai (206 aa).

The N-terminal stretch at 1-20 is a signal peptide; that stretch reads MARAALIVCLLMACAWSSHA. Topologically, residues 21-172 are lumenal; the sequence is VMFKLSPNTQ…RDTNEKTNSR (152 aa). Residues 30 to 140 form the GOLD domain; the sequence is QKCLKEDIQA…LKPLEVDLKR (111 aa). The helical transmembrane segment at 173-193 threads the bilayer; sequence VLFFSIFSMCCLLGLATWQVL. The Cytoplasmic segment spans residues 194–206; that stretch reads YLRRYFKAKKLIE.

Belongs to the EMP24/GP25L family.

It localises to the membrane. In terms of biological role, eca and bai are essential, though not redundant, for dorsoventral patterning of the embryo. Specifically required during early embryogenesis for the activity of maternal tkv, while the zygotic tkv is not affected. This is Transmembrane emp24 domain-containing protein bai from Drosophila erecta (Fruit fly).